A 278-amino-acid chain; its full sequence is Putative peptidase Cgl1093 (278 aa).

Positions 1–32 are cleaved as a signal peptide; that stretch reads MSSASFTTKALSVLAALTAASAPLVAASPAHA. The Peptidase S1 domain maps to 33–236; the sequence is LANARNVTGS…HAEWIAYYTG (204 aa). Cysteine 59 and cysteine 75 are disulfide-bonded. Residues histidine 74, aspartate 123, and serine 189 each act as charge relay system in the active site.

The protein belongs to the peptidase S1 family.

Its subcellular location is the secreted. The polypeptide is Putative peptidase Cgl1093 (Corynebacterium glutamicum (strain ATCC 13032 / DSM 20300 / JCM 1318 / BCRC 11384 / CCUG 27702 / LMG 3730 / NBRC 12168 / NCIMB 10025 / NRRL B-2784 / 534)).